Reading from the N-terminus, the 361-residue chain is Phosphoserine aminotransferase (361 aa).

Arg-42 lines the L-glutamate pocket. Pyridoxal 5'-phosphate-binding positions include 76-77 (AT), Trp-102, Thr-152, Asp-172, and Gln-195. Position 196 is an N6-(pyridoxal phosphate)lysine (Lys-196). Residue 237–238 (NT) coordinates pyridoxal 5'-phosphate.

This sequence belongs to the class-V pyridoxal-phosphate-dependent aminotransferase family. SerC subfamily. As to quaternary structure, homodimer. The cofactor is pyridoxal 5'-phosphate.

It is found in the cytoplasm. It catalyses the reaction O-phospho-L-serine + 2-oxoglutarate = 3-phosphooxypyruvate + L-glutamate. It carries out the reaction 4-(phosphooxy)-L-threonine + 2-oxoglutarate = (R)-3-hydroxy-2-oxo-4-phosphooxybutanoate + L-glutamate. It participates in amino-acid biosynthesis; L-serine biosynthesis; L-serine from 3-phospho-D-glycerate: step 2/3. It functions in the pathway cofactor biosynthesis; pyridoxine 5'-phosphate biosynthesis; pyridoxine 5'-phosphate from D-erythrose 4-phosphate: step 3/5. Catalyzes the reversible conversion of 3-phosphohydroxypyruvate to phosphoserine and of 3-hydroxy-2-oxo-4-phosphonooxybutanoate to phosphohydroxythreonine. This is Phosphoserine aminotransferase from Stenotrophomonas maltophilia (strain R551-3).